We begin with the raw amino-acid sequence, 351 residues long: Holliday junction branch migration complex subunit RuvB (351 aa).

Positions 1 to 22 are disordered; sequence MSDPKANRMVSPERRSDDVGDT. Residues 2–185 are large ATPase domain (RuvB-L); sequence SDPKANRMVS…FGIPVRLNFY (184 aa). Residues Leu24, Arg25, Gly66, Lys69, Thr70, Thr71, 132-134, Arg175, Tyr185, and Arg222 each bind ATP; that span reads EDF. Residue Thr70 coordinates Mg(2+). The segment at 186 to 256 is small ATPAse domain (RuvB-S); sequence TIEELESIVS…IADHALSALE (71 aa). Residues 259–351 are head domain (RuvB-H); that stretch reads AAGLDAMDRR…GLFGTDESDD (93 aa). Arg295, Arg314, and Arg319 together coordinate DNA.

Belongs to the RuvB family. In terms of assembly, homohexamer. Forms an RuvA(8)-RuvB(12)-Holliday junction (HJ) complex. HJ DNA is sandwiched between 2 RuvA tetramers; dsDNA enters through RuvA and exits via RuvB. An RuvB hexamer assembles on each DNA strand where it exits the tetramer. Each RuvB hexamer is contacted by two RuvA subunits (via domain III) on 2 adjacent RuvB subunits; this complex drives branch migration. In the full resolvosome a probable DNA-RuvA(4)-RuvB(12)-RuvC(2) complex forms which resolves the HJ.

It localises to the cytoplasm. It catalyses the reaction ATP + H2O = ADP + phosphate + H(+). Functionally, the RuvA-RuvB-RuvC complex processes Holliday junction (HJ) DNA during genetic recombination and DNA repair, while the RuvA-RuvB complex plays an important role in the rescue of blocked DNA replication forks via replication fork reversal (RFR). RuvA specifically binds to HJ cruciform DNA, conferring on it an open structure. The RuvB hexamer acts as an ATP-dependent pump, pulling dsDNA into and through the RuvAB complex. RuvB forms 2 homohexamers on either side of HJ DNA bound by 1 or 2 RuvA tetramers; 4 subunits per hexamer contact DNA at a time. Coordinated motions by a converter formed by DNA-disengaged RuvB subunits stimulates ATP hydrolysis and nucleotide exchange. Immobilization of the converter enables RuvB to convert the ATP-contained energy into a lever motion, pulling 2 nucleotides of DNA out of the RuvA tetramer per ATP hydrolyzed, thus driving DNA branch migration. The RuvB motors rotate together with the DNA substrate, which together with the progressing nucleotide cycle form the mechanistic basis for DNA recombination by continuous HJ branch migration. Branch migration allows RuvC to scan DNA until it finds its consensus sequence, where it cleaves and resolves cruciform DNA. The polypeptide is Holliday junction branch migration complex subunit RuvB (Bradyrhizobium diazoefficiens (strain JCM 10833 / BCRC 13528 / IAM 13628 / NBRC 14792 / USDA 110)).